A 328-amino-acid chain; its full sequence is Adenosine receptor A1 (328 aa).

Residues 1 to 10 lie on the Extracellular side of the membrane; it reads MPPSISAFQA. Residues 11-33 form a helical membrane-spanning segment; that stretch reads AYIGIEVLIALVSVPGNVLVIWA. Topologically, residues 34 to 46 are cytoplasmic; it reads VKVNQALRDATFC. The helical transmembrane segment at 47-69 threads the bilayer; sequence FIVSLAVADVAVGALVIPLAILI. Topologically, residues 70-80 are extracellular; that stretch reads NIGPETYFHTC. An intrachain disulfide couples C80 to C169. Residues 81–102 form a helical membrane-spanning segment; sequence LMVACPVLILTQSSILALLAIA. Residues 103–123 are Cytoplasmic-facing; it reads VDRYLRVKIPLRYKAVVTPRR. Residues 124–146 traverse the membrane as a helical segment; sequence AAVAIAGCWILSLVVGLTPMFGW. At 147-176 the chain is on the extracellular side; that stretch reads NNLREVQRAWAANGSVGEPVIKCEFEKVIS. An N-linked (GlcNAc...) asparagine glycan is attached at N159. Residues 177-201 traverse the membrane as a helical segment; it reads MEYMVYFNFFVWVLPPLLLMVLIYL. Residues 202-235 lie on the Cytoplasmic side of the membrane; the sequence is EVFYLIRRQLSKKASASSGDPHKYYGKELKIAKS. A helical transmembrane segment spans residues 236-259; the sequence is LALILFLFALSWLPLHILNCVTLF. At 260–267 the chain is on the extracellular side; it reads CPSCQKPS. A helical transmembrane segment spans residues 268–292; the sequence is ILVYTAIFLTHGNSAMNPIVYAFRI. The Cytoplasmic segment spans residues 293-328; it reads HKFRVTFLKIWNDHFRCRPAPAGDGDEDLPEEKPND. C309 is lipidated: S-palmitoyl cysteine.

The protein belongs to the G-protein coupled receptor 1 family.

The protein resides in the cell membrane. Functionally, receptor for adenosine. The activity of this receptor is mediated by G proteins which inhibit adenylyl cyclase. The chain is Adenosine receptor A1 (ADORA1) from Oryctolagus cuniculus (Rabbit).